We begin with the raw amino-acid sequence, 594 residues long: Aspartate--tRNA(Asp/Asn) ligase (594 aa).

Glu175 is an L-aspartate binding site. The aspartate stretch occupies residues 199 to 202; it reads QLFK. An L-aspartate-binding site is contributed by Arg221. Residues 221 to 223 and Gln230 each bind ATP; that span reads RDE. Position 446 (His446) interacts with L-aspartate. Glu492 is a binding site for ATP. L-aspartate is bound at residue Arg499. 544–547 serves as a coordination point for ATP; that stretch reads GFDR.

Belongs to the class-II aminoacyl-tRNA synthetase family. Type 1 subfamily. In terms of assembly, homodimer.

Its subcellular location is the cytoplasm. The enzyme catalyses tRNA(Asx) + L-aspartate + ATP = L-aspartyl-tRNA(Asx) + AMP + diphosphate. Aspartyl-tRNA synthetase with relaxed tRNA specificity since it is able to aspartylate not only its cognate tRNA(Asp) but also tRNA(Asn). Reaction proceeds in two steps: L-aspartate is first activated by ATP to form Asp-AMP and then transferred to the acceptor end of tRNA(Asp/Asn). This chain is Aspartate--tRNA(Asp/Asn) ligase, found in Hydrogenobaculum sp. (strain Y04AAS1).